A 265-amino-acid polypeptide reads, in one-letter code: 4-hydroxy-tetrahydrodipicolinate reductase (265 aa).

NAD(+) contacts are provided by residues 7–12 (GASGRM), Asp33, 96–98 (GTT), and 120–123 (AANM). The Proton donor/acceptor role is filled by His153. His154 provides a ligand contact to (S)-2,3,4,5-tetrahydrodipicolinate. The active-site Proton donor is the Lys157. 163 to 164 (GT) lines the (S)-2,3,4,5-tetrahydrodipicolinate pocket.

This sequence belongs to the DapB family.

The protein localises to the cytoplasm. It catalyses the reaction (S)-2,3,4,5-tetrahydrodipicolinate + NAD(+) + H2O = (2S,4S)-4-hydroxy-2,3,4,5-tetrahydrodipicolinate + NADH + H(+). The catalysed reaction is (S)-2,3,4,5-tetrahydrodipicolinate + NADP(+) + H2O = (2S,4S)-4-hydroxy-2,3,4,5-tetrahydrodipicolinate + NADPH + H(+). Its pathway is amino-acid biosynthesis; L-lysine biosynthesis via DAP pathway; (S)-tetrahydrodipicolinate from L-aspartate: step 4/4. In terms of biological role, catalyzes the conversion of 4-hydroxy-tetrahydrodipicolinate (HTPA) to tetrahydrodipicolinate. In Cupriavidus metallidurans (strain ATCC 43123 / DSM 2839 / NBRC 102507 / CH34) (Ralstonia metallidurans), this protein is 4-hydroxy-tetrahydrodipicolinate reductase.